The sequence spans 108 residues: Protein RnfH (108 aa).

The tract at residues 86-108 (ARRRRAEKAKEEGRANKVTGGRA) is disordered.

It belongs to the UPF0125 (RnfH) family.

In Pseudoalteromonas atlantica (strain T6c / ATCC BAA-1087), this protein is Protein RnfH.